Consider the following 173-residue polypeptide: Shikimate kinase 1 (173 aa).

Gly-14–Thr-19 contributes to the ATP binding site. Residue Ser-18 participates in Mg(2+) binding. The substrate site is built by Asp-36, Arg-60, and Gly-82. Arg-120 lines the ATP pocket. Arg-140 lines the substrate pocket. Gln-157 is an ATP binding site.

Belongs to the shikimate kinase family. As to quaternary structure, monomer. The cofactor is Mg(2+).

The protein localises to the cytoplasm. It catalyses the reaction shikimate + ATP = 3-phosphoshikimate + ADP + H(+). It functions in the pathway metabolic intermediate biosynthesis; chorismate biosynthesis; chorismate from D-erythrose 4-phosphate and phosphoenolpyruvate: step 5/7. In terms of biological role, catalyzes the specific phosphorylation of the 3-hydroxyl group of shikimic acid using ATP as a cosubstrate. This is Shikimate kinase 1 from Escherichia fergusonii (strain ATCC 35469 / DSM 13698 / CCUG 18766 / IAM 14443 / JCM 21226 / LMG 7866 / NBRC 102419 / NCTC 12128 / CDC 0568-73).